The following is a 139-amino-acid chain: S-adenosylmethionine decarboxylase proenzyme (139 aa).

Catalysis depends on S63, which acts as the Schiff-base intermediate with substrate; via pyruvic acid. S63 carries the post-translational modification Pyruvic acid (Ser); by autocatalysis. Catalysis depends on H68, which acts as the Proton acceptor; for processing activity. C83 serves as the catalytic Proton donor; for catalytic activity.

This sequence belongs to the prokaryotic AdoMetDC family. Type 1 subfamily. In terms of assembly, heterotetramer of two alpha and two beta chains arranged as a dimer of alpha/beta heterodimers. Requires pyruvate as cofactor. Post-translationally, is synthesized initially as an inactive proenzyme. Formation of the active enzyme involves a self-maturation process in which the active site pyruvoyl group is generated from an internal serine residue via an autocatalytic post-translational modification. Two non-identical subunits are generated from the proenzyme in this reaction, and the pyruvate is formed at the N-terminus of the alpha chain, which is derived from the carboxyl end of the proenzyme. The post-translation cleavage follows an unusual pathway, termed non-hydrolytic serinolysis, in which the side chain hydroxyl group of the serine supplies its oxygen atom to form the C-terminus of the beta chain, while the remainder of the serine residue undergoes an oxidative deamination to produce ammonia and the pyruvoyl group blocking the N-terminus of the alpha chain.

The enzyme catalyses S-adenosyl-L-methionine + H(+) = S-adenosyl 3-(methylsulfanyl)propylamine + CO2. Its pathway is amine and polyamine biosynthesis; S-adenosylmethioninamine biosynthesis; S-adenosylmethioninamine from S-adenosyl-L-methionine: step 1/1. Catalyzes the decarboxylation of S-adenosylmethionine to S-adenosylmethioninamine (dcAdoMet), the propylamine donor required for the synthesis of the polyamines spermine and spermidine from the diamine putrescine. This is S-adenosylmethionine decarboxylase proenzyme from Pyrococcus furiosus (strain ATCC 43587 / DSM 3638 / JCM 8422 / Vc1).